The primary structure comprises 502 residues: Cyanidin 3-O-glucoside 5-O-glucosyltransferase (acyl-glucose) (502 aa).

An N-terminal signal peptide occupies residues 1 to 30 (MNMSCKFEIVLLVSWWLLLVLVFGVESSMF). Asn-2 carries N-linked (GlcNAc...) asparagine glycosylation. Residues Gln-52, His-150, and 196–197 (NE) contribute to the a beta-D-glucoside site. Glu-197 acts as the Proton donor in catalysis. Asn-303 carries an N-linked (GlcNAc...) asparagine glycan. The a beta-D-glucoside site is built by Tyr-320 and Glu-388. Glu-388 serves as the catalytic Nucleophile. The N-linked (GlcNAc...) asparagine glycan is linked to Asn-425. 2 residues coordinate a beta-D-glucoside: Trp-435 and Phe-451.

Belongs to the glycosyl hydrolase 1 family. In terms of tissue distribution, expressed in petals.

It is found in the vacuole. The catalysed reaction is cyanidin 3-O-beta-D-glucoside + 1-O-(trans-sinapoyl)-beta-D-glucose = cyanidin 3,5-di-O-beta-D-glucoside + (E)-sinapate. It participates in pigment biosynthesis; anthocyanin biosynthesis. Its function is as follows. Beta-glycosidase that catalyzes the transfer of glucose moiety to anthocyanidin 3-glucoside at the 5 position. Anthocyanins are ubiquitous colored pigments that are responsible for variations in petal color. Uses acyl-glucoses, but not UDP-glucose, as the glucose donor. The chain is Cyanidin 3-O-glucoside 5-O-glucosyltransferase (acyl-glucose) (AA5GT) from Dianthus caryophyllus (Carnation).